Reading from the N-terminus, the 269-residue chain is MPELPEVETSRRGIEPHLVGATILHAHIRNGRLRWPVSDEIYRLSDTPVLSVQRRAKYLLLELPDGWIIIHLGMSGSLRILPEALPAEKHDHVDLVMSNGKILRYTDPRRFGAWLWTKELEGHNVLAHLGPEPLSDEFNGEYLQQKCAKKKTAIKPWLMDNKLVVGVGNIYASESLFAAGIHPDRLASSLSTEECDLLARVIKAVLLRSIEQGGTTLKDFPQSDGKPGYFAQELQVYGRKGEPCRVCGTPIVATKHAQRATFYCRHCQK.

Catalysis depends on Pro2, which acts as the Schiff-base intermediate with DNA. Catalysis depends on Glu3, which acts as the Proton donor. The active-site Proton donor; for beta-elimination activity is Lys57. 3 residues coordinate DNA: His90, Arg109, and Lys150. An FPG-type zinc finger spans residues 235 to 269; it reads QVYGRKGEPCRVCGTPIVATKHAQRATFYCRHCQK. Arg259 functions as the Proton donor; for delta-elimination activity in the catalytic mechanism.

Belongs to the FPG family. In terms of assembly, monomer. Requires Zn(2+) as cofactor.

The catalysed reaction is Hydrolysis of DNA containing ring-opened 7-methylguanine residues, releasing 2,6-diamino-4-hydroxy-5-(N-methyl)formamidopyrimidine.. It catalyses the reaction 2'-deoxyribonucleotide-(2'-deoxyribose 5'-phosphate)-2'-deoxyribonucleotide-DNA = a 3'-end 2'-deoxyribonucleotide-(2,3-dehydro-2,3-deoxyribose 5'-phosphate)-DNA + a 5'-end 5'-phospho-2'-deoxyribonucleoside-DNA + H(+). Functionally, involved in base excision repair of DNA damaged by oxidation or by mutagenic agents. Acts as a DNA glycosylase that recognizes and removes damaged bases. Has a preference for oxidized purines, such as 7,8-dihydro-8-oxoguanine (8-oxoG). Has AP (apurinic/apyrimidinic) lyase activity and introduces nicks in the DNA strand. Cleaves the DNA backbone by beta-delta elimination to generate a single-strand break at the site of the removed base with both 3'- and 5'-phosphates. In Salmonella paratyphi C (strain RKS4594), this protein is Formamidopyrimidine-DNA glycosylase.